The following is a 553-amino-acid chain: Urocanate hydratase (553 aa).

NAD(+) contacts are provided by residues 45–46 (GG), Gln-123, 169–171 (GMG), Asp-189, Arg-194, 235–236 (NA), 256–260 (QTSAH), 266–267 (YV), Tyr-315, and Gly-485.

This sequence belongs to the urocanase family. NAD(+) serves as cofactor.

Its subcellular location is the cytoplasm. The enzyme catalyses 4-imidazolone-5-propanoate = trans-urocanate + H2O. It participates in amino-acid degradation; L-histidine degradation into L-glutamate; N-formimidoyl-L-glutamate from L-histidine: step 2/3. Functionally, catalyzes the conversion of urocanate to 4-imidazolone-5-propionate. This chain is Urocanate hydratase, found in Staphylococcus saprophyticus subsp. saprophyticus (strain ATCC 15305 / DSM 20229 / NCIMB 8711 / NCTC 7292 / S-41).